The primary structure comprises 164 residues: Envelope glycoprotein L (164 aa).

A signal peptide spans 1–24; it reads MRSLDRYAIFILLACGLLWRPCLS.

Belongs to the herpesviridae glycoprotein L family. As to quaternary structure, interacts with glycoprotein H (gH); this interaction is necessary for the correct processing and cell surface expression of gH. The heterodimer gH/gL seems to interact with gB trimers during fusion.

The protein resides in the virion membrane. It is found in the host cell membrane. Its subcellular location is the host Golgi apparatus. The protein localises to the host trans-Golgi network. The heterodimer glycoprotein H-glycoprotein L is required for the fusion of viral and plasma membranes leading to virus entry into the host cell. Acts as a functional inhibitor of gH and maintains gH in an inhibited form. Upon binding to host integrins, gL dissociates from gH leading to activation of the viral fusion glycoproteins gB and gH. The sequence is that of Envelope glycoprotein L from Equine herpesvirus 2 (strain 86/87) (EHV-2).